The primary structure comprises 440 residues: RNA polymerase II C-terminal domain phosphatase-like 4 (440 aa).

The segment covering 1–36 (MSVASDSPVHSSSSSDDLAAFLDAELDSASDASSGP) has biased composition (low complexity). A disordered region spans residues 1–49 (MSVASDSPVHSSSSSDDLAAFLDAELDSASDASSGPSEEEEAEDDVESG). The span at 37 to 47 (SEEEEAEDDVE) shows a compositional bias: acidic residues. Residues 118 to 292 (QRQRKLYLVL…DHRYKSLSEL (175 aa)) form the FCP1 homology domain. The BRCT domain maps to 337 to 429 (VRKEILKGCK…MKQPEENFGL (93 aa)).

As to quaternary structure, interacts with RAP74. Mg(2+) serves as cofactor. The cofactor is Co(2+). Requires Mn(2+) as cofactor.

The protein localises to the nucleus. It catalyses the reaction O-phospho-L-seryl-[protein] + H2O = L-seryl-[protein] + phosphate. It carries out the reaction O-phospho-L-threonyl-[protein] + H2O = L-threonyl-[protein] + phosphate. Processively dephosphorylates 'Ser-2' and/or 'Ser-5' of the heptad repeats YSPTSPS in the C-terminal domain of the largest RNA polymerase II subunit (RPB1). This promotes the activity of RNA polymerase II. Required for normal plant growth. This Arabidopsis thaliana (Mouse-ear cress) protein is RNA polymerase II C-terminal domain phosphatase-like 4 (CPL4).